The chain runs to 20 residues: Unknown protein NF028 from 2D-PAGE (20 aa).

This Naegleria fowleri (Brain eating amoeba) protein is Unknown protein NF028 from 2D-PAGE.